The following is a 265-amino-acid chain: Molybdenum-pterin-binding protein MopA (265 aa).

2 consecutive Mop domains span residues 126 to 192 (RTSN…MLAA) and 198 to 264 (RISA…ILAM).

It belongs to the ModE family.

This chain is Molybdenum-pterin-binding protein MopA (mopA), found in Rhodobacter capsulatus (Rhodopseudomonas capsulata).